A 232-amino-acid chain; its full sequence is Vesicle transport through interaction with t-SNAREs homolog 1B (232 aa).

The residue at position 2 (Ala-2) is an N-acetylalanine. Interaction with CLINT1 stretches follow at residues 2–23 (ATSA…GLHE) and 69–73 (APLSF). Topologically, residues 2–208 (ATSAASSEHF…SRKVTTNKLL (207 aa)) are cytoplasmic. Positions 35–98 (MAGTEEKKKL…AKLHREVRST (64 aa)) form a coiled coil. At Thr-103 the chain carries Phosphothreonine. Arg-107 bears the Omega-N-methylarginine mark. Position 138 is a phosphoserine (Ser-138). A coiled-coil region spans residues 161–198 (SEIIEELGEQRDQLERTKSRLVNTSENLSKSRKILRSM). Residues 209–229 (LSIVILLELAILGGLVYYKFL) form a helical; Anchor for type IV membrane protein membrane-spanning segment. Over 230-232 (RRH) the chain is Vesicular.

Belongs to the VTI1 family. In terms of assembly, forms a SNARE complex with STX7, STX8 and VAMP8 which functions in the homotypic fusion of late endosomes. Component of the SNARE complex composed of STX7, STX8, VAMP7 and VIT1B that is required for heterotypic fusion of late endosomes with lysosomes. May interact with STX17. Interacts with CLINT1.

It localises to the early endosome membrane. It is found in the late endosome membrane. Its subcellular location is the lysosome membrane. The protein localises to the cytoplasmic granule. The protein resides in the recycling endosome membrane. V-SNARE that mediates vesicle transport pathways through interactions with t-SNAREs on the target membrane. These interactions are proposed to mediate aspects of the specificity of vesicle trafficking and to promote fusion of the lipid bilayers. May be concerned with increased secretion of cytokines associated with cellular senescence. The polypeptide is Vesicle transport through interaction with t-SNAREs homolog 1B (VTI1B) (Bos taurus (Bovine)).